The sequence spans 310 residues: tRNA-splicing endonuclease subunit Sen34 (310 aa).

The segment at 119–177 (GQAAKKQKLEQASGASSSQEAGSSQAAKEDETSDGQASGEQEEAGPSSSQAGPSNGVAP) is disordered. The span at 128 to 144 (EQASGASSSQEAGSSQA) shows a compositional bias: low complexity. Catalysis depends on residues Tyr-247, His-255, and Lys-286.

This sequence belongs to the tRNA-intron endonuclease family. TRNA splicing endonuclease is a heterotetramer composed of TSEN2, TSEN15, TSEN34/LENG5 and TSEN54. tRNA splicing endonuclease complex also contains proteins of the pre-mRNA 3'-end processing machinery such as CLP1, CPSF1, CPSF4 and CSTF2.

It localises to the nucleus. The protein localises to the nucleolus. The enzyme catalyses pretRNA = a 3'-half-tRNA molecule with a 5'-OH end + a 5'-half-tRNA molecule with a 2',3'-cyclic phosphate end + an intron with a 2',3'-cyclic phosphate and a 5'-hydroxyl terminus.. Constitutes one of the two catalytic subunit of the tRNA-splicing endonuclease complex, a complex responsible for identification and cleavage of the splice sites in pre-tRNA. It cleaves pre-tRNA at the 5'- and 3'-splice sites to release the intron. The products are an intron and two tRNA half-molecules bearing 2',3'-cyclic phosphate and 5'-OH termini. There are no conserved sequences at the splice sites, but the intron is invariably located at the same site in the gene, placing the splice sites an invariant distance from the constant structural features of the tRNA body. It probably carries the active site for 3'-splice site cleavage. The tRNA splicing endonuclease is also involved in mRNA processing via its association with pre-mRNA 3'-end processing factors, establishing a link between pre-tRNA splicing and pre-mRNA 3'-end formation, suggesting that the endonuclease subunits function in multiple RNA-processing events. The chain is tRNA-splicing endonuclease subunit Sen34 (TSEN34) from Homo sapiens (Human).